Reading from the N-terminus, the 312-residue chain is Pimeloyl-[acyl-carrier protein] methyl ester esterase (312 aa).

Residues 17 to 241 (VYLIHGWGAN…KAAHAPFLSH (225 aa)) enclose the AB hydrolase-1 domain. Substrate-binding positions include Trp23, 83-84 (SL), and 145-149 (FLQLQ). Ser83 serves as the catalytic Nucleophile. Active-site residues include Asp207 and His235. His235 is a binding site for substrate.

This sequence belongs to the AB hydrolase superfamily. Carboxylesterase BioH family. In terms of assembly, monomer.

It is found in the cytoplasm. It catalyses the reaction 6-carboxyhexanoyl-[ACP] methyl ester + H2O = 6-carboxyhexanoyl-[ACP] + methanol + H(+). It participates in cofactor biosynthesis; biotin biosynthesis. Functionally, the physiological role of BioH is to remove the methyl group introduced by BioC when the pimeloyl moiety is complete. It allows to synthesize pimeloyl-ACP via the fatty acid synthetic pathway through the hydrolysis of the ester bonds of pimeloyl-ACP esters. The polypeptide is Pimeloyl-[acyl-carrier protein] methyl ester esterase (Neisseria meningitidis serogroup A / serotype 4A (strain DSM 15465 / Z2491)).